A 392-amino-acid polypeptide reads, in one-letter code: Formate-dependent phosphoribosylglycinamide formyltransferase (392 aa).

N(1)-(5-phospho-beta-D-ribosyl)glycinamide is bound by residues 22–23 and glutamate 82; that span reads EL. Residues arginine 114, lysine 155, 160–165, 195–198, and glutamate 203 each bind ATP; these read SSGKGQ and EGVV. Residues 119–308 enclose the ATP-grasp domain; the sequence is RLAAEELWVP…EFALHVRAFL (190 aa). Positions 267 and 279 each coordinate Mg(2+). Residues aspartate 286, lysine 355, and 362 to 363 contribute to the N(1)-(5-phospho-beta-D-ribosyl)glycinamide site; that span reads RR.

Belongs to the PurK/PurT family. Homodimer.

The enzyme catalyses N(1)-(5-phospho-beta-D-ribosyl)glycinamide + formate + ATP = N(2)-formyl-N(1)-(5-phospho-beta-D-ribosyl)glycinamide + ADP + phosphate + H(+). It functions in the pathway purine metabolism; IMP biosynthesis via de novo pathway; N(2)-formyl-N(1)-(5-phospho-D-ribosyl)glycinamide from N(1)-(5-phospho-D-ribosyl)glycinamide (formate route): step 1/1. Its function is as follows. Involved in the de novo purine biosynthesis. Catalyzes the transfer of formate to 5-phospho-ribosyl-glycinamide (GAR), producing 5-phospho-ribosyl-N-formylglycinamide (FGAR). Formate is provided by PurU via hydrolysis of 10-formyl-tetrahydrofolate. This chain is Formate-dependent phosphoribosylglycinamide formyltransferase, found in Erwinia tasmaniensis (strain DSM 17950 / CFBP 7177 / CIP 109463 / NCPPB 4357 / Et1/99).